Reading from the N-terminus, the 343-residue chain is Heat-inducible transcription repressor HrcA (343 aa).

The protein belongs to the HrcA family.

Functionally, negative regulator of class I heat shock genes (grpE-dnaK-dnaJ and groELS operons). Prevents heat-shock induction of these operons. The sequence is that of Heat-inducible transcription repressor HrcA from Mycobacterium tuberculosis (strain ATCC 25177 / H37Ra).